We begin with the raw amino-acid sequence, 264 residues long: tRNA pseudouridine synthase A (264 aa).

Aspartate 56 acts as the Nucleophile in catalysis. Tyrosine 114 provides a ligand contact to substrate.

The protein belongs to the tRNA pseudouridine synthase TruA family. Homodimer.

The catalysed reaction is uridine(38/39/40) in tRNA = pseudouridine(38/39/40) in tRNA. Functionally, formation of pseudouridine at positions 38, 39 and 40 in the anticodon stem and loop of transfer RNAs. In Buchnera aphidicola subsp. Baizongia pistaciae (strain Bp), this protein is tRNA pseudouridine synthase A.